Reading from the N-terminus, the 142-residue chain is Large ribosomal subunit protein uL13 (142 aa).

This sequence belongs to the universal ribosomal protein uL13 family. As to quaternary structure, part of the 50S ribosomal subunit.

This protein is one of the early assembly proteins of the 50S ribosomal subunit, although it is not seen to bind rRNA by itself. It is important during the early stages of 50S assembly. This chain is Large ribosomal subunit protein uL13, found in Histophilus somni (Haemophilus somnus).